The following is a 168-amino-acid chain: 2-oxo-4-hydroxy-4-carboxy-5-ureidoimidazoline decarboxylase (168 aa).

The active-site Proton donor; for OHCU decarboxylase activity is the His70. Over residues 70–79 (HPDLGERTEM) the composition is skewed to basic and acidic residues. The tract at residues 70–93 (HPDLGERTEMTDASEAEQASAELD) is disordered. Substrate contacts are provided by residues Pro71, 83 to 87 (SEAEQ), and 118 to 122 (FVMAV).

The protein belongs to the OHCU decarboxylase family.

The catalysed reaction is 5-hydroxy-2-oxo-4-ureido-2,5-dihydro-1H-imidazole-5-carboxylate + H(+) = (S)-allantoin + CO2. It functions in the pathway purine metabolism; urate degradation; (S)-allantoin from urate: step 3/3. Catalyzes the stereoselective decarboxylation of 2-oxo-4-hydroxy-4-carboxy-5-ureidoimidazoline (OHCU) to (S)-allantoin. The polypeptide is 2-oxo-4-hydroxy-4-carboxy-5-ureidoimidazoline decarboxylase (Haloferax volcanii (strain ATCC 29605 / DSM 3757 / JCM 8879 / NBRC 14742 / NCIMB 2012 / VKM B-1768 / DS2) (Halobacterium volcanii)).